The sequence spans 226 residues: NAD(P)H-hydrate epimerase (226 aa).

The YjeF N-terminal domain maps to Ala10–Leu215. A (6S)-NADPHX-binding site is contributed by Asn58 to Asp62. Residues Asn59 and Asp123 each coordinate K(+). (6S)-NADPHX is bound by residues Gly127–Pro133 and Asp156. Ser159 contributes to the K(+) binding site.

This sequence belongs to the NnrE/AIBP family. Requires K(+) as cofactor.

It catalyses the reaction (6R)-NADHX = (6S)-NADHX. The catalysed reaction is (6R)-NADPHX = (6S)-NADPHX. Its function is as follows. Catalyzes the epimerization of the S- and R-forms of NAD(P)HX, a damaged form of NAD(P)H that is a result of enzymatic or heat-dependent hydration. This is a prerequisite for the S-specific NAD(P)H-hydrate dehydratase to allow the repair of both epimers of NAD(P)HX. The sequence is that of NAD(P)H-hydrate epimerase from Drosophila pseudoobscura pseudoobscura (Fruit fly).